Reading from the N-terminus, the 262-residue chain is Serine O-acetyltransferase (262 aa).

C107 (acyl-thioester intermediate) is an active-site residue. Position 128 (K128) interacts with substrate. The Proton acceptor role is filled by H200. The active site involves E202. A substrate-binding site is contributed by R214.

This sequence belongs to the MetA family.

It is found in the cytoplasm. It catalyses the reaction L-serine + acetyl-CoA = O-acetyl-L-serine + CoA. The enzyme catalyses L-homoserine + acetyl-CoA = O-acetyl-L-homoserine + CoA. It functions in the pathway amino-acid biosynthesis; L-cysteine biosynthesis; L-cysteine from L-serine: step 1/2. Its function is as follows. Transfers an acetyl group from acetyl-CoA to L-serine, forming acetyl-L-serine. In vitro, also has homoserine acetyl transferase activity. The polypeptide is Serine O-acetyltransferase (Lactobacillus acidophilus).